Reading from the N-terminus, the 157-residue chain is MQKIGIYPGTFDPVTNGHIDIIHRSSELFEKLIVAVAHSSAKNPMFSLKERLKMMQLATKSFKNVECVAFEGLLANLAKEYHCKVLVRGLRVVSDFEYELQMGYANKSLNHELETLYFMPTLQNAFISSSIVRSIIAHKGDASHLVPKEIYPLISKA.

Threonine 10 provides a ligand contact to substrate. ATP is bound by residues threonine 10–phenylalanine 11 and histidine 18. Positions 42, 74, and 88 each coordinate substrate. ATP-binding positions include glycine 89–arginine 91, glutamate 99, and asparagine 124–serine 130.

Belongs to the bacterial CoaD family. In terms of assembly, homohexamer. The cofactor is Mg(2+).

Its subcellular location is the cytoplasm. It carries out the reaction (R)-4'-phosphopantetheine + ATP + H(+) = 3'-dephospho-CoA + diphosphate. It functions in the pathway cofactor biosynthesis; coenzyme A biosynthesis; CoA from (R)-pantothenate: step 4/5. Functionally, reversibly transfers an adenylyl group from ATP to 4'-phosphopantetheine, yielding dephospho-CoA (dPCoA) and pyrophosphate. The chain is Phosphopantetheine adenylyltransferase from Helicobacter pylori (strain P12).